A 100-amino-acid chain; its full sequence is C-X-C motif chemokine 2 (100 aa).

A signal peptide spans 1-31 (MAPPTRQLLNAVLVLLLLLATNHQGTGVVVA). 2 disulfides stabilise this stretch: Cys36-Cys62 and Cys38-Cys78.

This sequence belongs to the intercrine alpha (chemokine CxC) family. In terms of assembly, homotetramer. At least expressed in the lung and trachea.

The protein resides in the secreted. Its function is as follows. Chemotactic for human polymorphonuclear leukocytes but does not induce chemokinesis or an oxidative burst. Contributes to neutrophil activation during inflammation. The protein is C-X-C motif chemokine 2 (Cxcl2) of Rattus norvegicus (Rat).